The following is a 166-amino-acid chain: Phosphopantetheine adenylyltransferase (166 aa).

A substrate-binding site is contributed by Ser-9. Residues 9–10 (SF) and His-17 each bind ATP. Substrate-binding residues include Lys-41, Leu-74, and Lys-88. ATP contacts are provided by residues 89-91 (GLR), Glu-99, and 123-129 (YVHLSST).

The protein belongs to the bacterial CoaD family. As to quaternary structure, homohexamer. Mg(2+) is required as a cofactor.

The protein localises to the cytoplasm. It catalyses the reaction (R)-4'-phosphopantetheine + ATP + H(+) = 3'-dephospho-CoA + diphosphate. The protein operates within cofactor biosynthesis; coenzyme A biosynthesis; CoA from (R)-pantothenate: step 4/5. Reversibly transfers an adenylyl group from ATP to 4'-phosphopantetheine, yielding dephospho-CoA (dPCoA) and pyrophosphate. This is Phosphopantetheine adenylyltransferase from Paenarthrobacter aurescens (strain TC1).